A 986-amino-acid chain; its full sequence is MSQWTPEYNELYTLKVDMKSEIPSDAPKTQESLKGILLHPEPIGAAKSFPAGVEMINSKVGNEFSHLCDDSQKQEKDMNGNQQEQEKSLVVRKKRKSQQAGPSYVQNCVKENQGILGLRQHLGTPSDEDNDSSFSDCLSSPSSSLHFGDSDTVTSDEDKEVSVRHSQTILNAKSRSHSARSHKWPRTETESVSGLLMKRPCLHGSSLRRLPCRKRFVKNNSSQRTQKQKERILMQRKKREVLARRKYALLPSSSSSSENDLSSESSSSSSTEGEEDLFVSASENHQNNPAVPSGSIDEDVVVIEASSTPQVTANEEINVTSTDSEVEIVTVGESYRSRSTLGHSRSHWSQGSSSHASRPQEPRNRSRISTVIQPLRQNAAEVVDLTVDEDEPTVVPTTSARMESQATSASINNSNPSTSEQASDTASAVTGSQPSTVSETSATLTSNSTTGTSIGDDSRRTTSSAVMETGPPAMPRLPSCCPQHSPCGGSSQNHHALGHPHTSCFQQHGHHFQHHHHHHHTPHPAVPVSPSFSDPACPVERPPQVQAPCGANSSSGTSYHEQQALPVDLSNNGIRSHGSGSFHGASAFDPCCPVSSSRAAIFGHQAAAAAPSQPLSSIDGYGSSMVAQPQPQPPPQPSLSSCRHYMPPTYASLTRPLHHQASACPHSHGNPPPQTQPPPQVDYVIPHPVHAFHSQISSHATSHPVAPPPPTHLASTAAPIPQHLPPTHQPISHHIPATAPPAQRLHPHEVMQRMEVRRRRMMQHPTRAHERPPPHPHRMHPNYGHGHHIHVPQTMSSHPRQAPERSAWELGIEAGVTAATYTPGALHPHLAHYHAPPRLHHLQLGALPLMVPDMAGYPHIRYISSGLDGTSFRGPFRGNFEELIHLEERLGNVNRGASQGTIERCTYPHKYKKRKLHCKQDGEEGTEEDTEEKCTICLSILEEGEDVRRLPCMHLFHQVCVDQWLITNKKCPICRVDIEAQLPSES.

Residues lysine 19, lysine 28, lysine 34, lysine 47, lysine 59, lysine 73, lysine 87, lysine 96, and lysine 110 each participate in a glycyl lysine isopeptide (Lys-Gly) (interchain with G-Cter in SUMO2) cross-link. The segment covering 66–89 (HLCDDSQKQEKDMNGNQQEQEKSL) has biased composition (basic and acidic residues). Residues 66-106 (HLCDDSQKQEKDMNGNQQEQEKSLVVRKKRKSQQAGPSYVQ) form a disordered region. The interval 120–191 (QHLGTPSDED…HKWPRTETES (72 aa)) is disordered. Low complexity predominate over residues 132–151 (SSFSDCLSSPSSSLHFGDSD). The segment covering 164–173 (RHSQTILNAK) has biased composition (polar residues). A Glycyl lysine isopeptide (Lys-Gly) (interchain with G-Cter in SUMO2) cross-link involves residue lysine 173. A compositionally biased stretch (basic residues) spans 174–184 (SRSHSARSHKW). Glycyl lysine isopeptide (Lys-Gly) (interchain with G-Cter in SUMO2) cross-links involve residues lysine 198 and lysine 218. Positions 241–404 (VLARRKYALL…VPTTSARMES (164 aa)) are interaction with AXIN1. A disordered region spans residues 248–277 (ALLPSSSSSSENDLSSESSSSSSTEGEEDL). Residues 252–271 (SSSSSSENDLSSESSSSSST) show a composition bias toward low complexity. Positions 300 to 304 (VVVIE) match the SUMO interaction motif 1 (SIM) motif. Residues 325–331 (EVEIVTV) carry the SUMO interaction motif 2 (SIM) motif. Positions 337-373 (SRSTLGHSRSHWSQGSSSHASRPQEPRNRSRISTVIQ) are disordered. A compositionally biased stretch (low complexity) spans 347-357 (HWSQGSSSHAS). The SUMO interaction motif 3 (SIM) signature appears at 382-386 (VVDLT). Disordered regions lie at residues 389–471 (EDEP…ETGP), 506–561 (QQHG…SYHE), 610–646 (APSQ…RHYM), 659–684 (HQAS…VDYV), and 696–719 (ISSH…TAAP). The span at 395 to 466 (VPTTSARMES…DSRRTTSSAV (72 aa)) shows a compositional bias: polar residues. Basic residues predominate over residues 508-522 (HGHHFQHHHHHHHTP). Residues 551-561 (ANSSSGTSYHE) show a composition bias toward polar residues. Pro residues predominate over residues 670–680 (NPPPQTQPPPQ). Residues 907-909 (YPH) form a ubiquitin binding region. Residues lysine 915 and lysine 919 each participate in a glycyl lysine isopeptide (Lys-Gly) (interchain with G-Cter in SUMO2) cross-link. Residues cysteine 934 and cysteine 937 each coordinate Zn(2+). The RING-type; atypical zinc-finger motif lies at 934-975 (CTICLSILEEGEDVRRLPCMHLFHQVCVDQWLITNKKCPICR). A ubiquitin binding region spans residues 949–953 (RLPCM). Zn(2+) is bound by residues histidine 957 and cysteine 960.

It belongs to the Arkadia family. In terms of assembly, monomer. Interacts with SMAD6, SMAD7, AXIN1, AXIN2 and SKIL isoform SNON. Interacts with (phosphorylated) SMAD2 and SMAD3. Part of a complex containing RNF111, AXIN1 and SMAD7. Interacts (via SIM domains) with SUMO1 and SUMO2.

The protein localises to the nucleus. It is found in the cytoplasm. The protein resides in the PML body. It catalyses the reaction S-ubiquitinyl-[E2 ubiquitin-conjugating enzyme]-L-cysteine + [acceptor protein]-L-lysine = [E2 ubiquitin-conjugating enzyme]-L-cysteine + N(6)-ubiquitinyl-[acceptor protein]-L-lysine.. Its pathway is protein modification; protein ubiquitination. Its activity is regulated as follows. Binds free ubiquitin non-covalently via its RING-type zinc finger. Ubiquitin-binding leads to enhance the E3 ubiquitin-protein ligase activity by stabilizing the ubiquitin-conjugating enzyme E2 (donor ubiquitin) in the 'closed' conformation and activating ubiquitin transfer. In terms of biological role, E3 ubiquitin-protein ligase. Required for mesoderm patterning during embryonic development. Acts as an enhancer of the transcriptional responses of the SMAD2/SMAD3 effectors, which are activated downstream of BMP. Acts by mediating ubiquitination and degradation of SMAD inhibitors such as SMAD7, inducing their proteasomal degradation and thereby enhancing the transcriptional activity of TGF-beta and BMP. In addition to enhance transcription of SMAD2/SMAD3 effectors, also regulates their turnover by mediating their ubiquitination and subsequent degradation, coupling their activation with degradation, thereby ensuring that only effectors 'in use' are degraded. Activates SMAD3/SMAD4-dependent transcription by triggering signal-induced degradation of SNON isoform of SKIL. Associates with UBE2D2 as an E2 enzyme. Specifically binds polysumoylated chains via SUMO interaction motifs (SIMs) and mediates ubiquitination of sumoylated substrates. Catalyzes 'Lys-63'-linked ubiquitination of sumoylated XPC in response to UV irradiation, promoting nucleotide excision repair. Mediates ubiquitination and degradation of sumoylated PML. The regulation of the BMP-SMAD signaling is however independent of sumoylation and is not dependent of SUMO interaction motifs (SIMs). The protein is E3 ubiquitin-protein ligase Arkadia (RNF111) of Pongo abelii (Sumatran orangutan).